The following is a 283-amino-acid chain: Phosphatidylserine decarboxylase proenzyme (283 aa).

Active-site charge relay system; for autoendoproteolytic cleavage activity residues include D89, H146, and S249. Catalysis depends on S249, which acts as the Schiff-base intermediate with substrate; via pyruvic acid; for decarboxylase activity. S249 is subject to Pyruvic acid (Ser); by autocatalysis.

It belongs to the phosphatidylserine decarboxylase family. PSD-B subfamily. Prokaryotic type I sub-subfamily. Heterodimer of a large membrane-associated beta subunit and a small pyruvoyl-containing alpha subunit. Pyruvate serves as cofactor. Is synthesized initially as an inactive proenzyme. Formation of the active enzyme involves a self-maturation process in which the active site pyruvoyl group is generated from an internal serine residue via an autocatalytic post-translational modification. Two non-identical subunits are generated from the proenzyme in this reaction, and the pyruvate is formed at the N-terminus of the alpha chain, which is derived from the carboxyl end of the proenzyme. The autoendoproteolytic cleavage occurs by a canonical serine protease mechanism, in which the side chain hydroxyl group of the serine supplies its oxygen atom to form the C-terminus of the beta chain, while the remainder of the serine residue undergoes an oxidative deamination to produce ammonia and the pyruvoyl prosthetic group on the alpha chain. During this reaction, the Ser that is part of the protease active site of the proenzyme becomes the pyruvoyl prosthetic group, which constitutes an essential element of the active site of the mature decarboxylase.

It is found in the cell membrane. It catalyses the reaction a 1,2-diacyl-sn-glycero-3-phospho-L-serine + H(+) = a 1,2-diacyl-sn-glycero-3-phosphoethanolamine + CO2. The protein operates within phospholipid metabolism; phosphatidylethanolamine biosynthesis; phosphatidylethanolamine from CDP-diacylglycerol: step 2/2. Catalyzes the formation of phosphatidylethanolamine (PtdEtn) from phosphatidylserine (PtdSer). This chain is Phosphatidylserine decarboxylase proenzyme, found in Legionella pneumophila (strain Lens).